The chain runs to 360 residues: Alanine racemase (360 aa).

Catalysis depends on lysine 36, which acts as the Proton acceptor; specific for D-alanine. Position 36 is an N6-(pyridoxal phosphate)lysine (lysine 36). Arginine 132 contacts substrate. The active-site Proton acceptor; specific for L-alanine is tyrosine 256. Methionine 304 serves as a coordination point for substrate.

It belongs to the alanine racemase family. The cofactor is pyridoxal 5'-phosphate.

The catalysed reaction is L-alanine = D-alanine. The protein operates within amino-acid biosynthesis; D-alanine biosynthesis; D-alanine from L-alanine: step 1/1. In terms of biological role, catalyzes the interconversion of L-alanine and D-alanine. May also act on other amino acids. This chain is Alanine racemase (alr), found in Pasteurella multocida (strain Pm70).